The sequence spans 216 residues: Ceramide-1-phosphate transfer protein (216 aa).

An N-acylsphingoid base 1-phosphate-binding residues include Asp56, Lys60, Arg108, Arg112, and His152.

It belongs to the GLTP family.

The protein resides in the cytoplasm. The protein localises to the cytosol. It localises to the golgi apparatus. It is found in the trans-Golgi network membrane. Its subcellular location is the cell membrane. The protein resides in the endosome membrane. The protein localises to the nucleus outer membrane. The catalysed reaction is N-(hexadecanoyl)-sphing-4-enine-1-phosphate(in) = N-(hexadecanoyl)-sphing-4-enine-1-phosphate(out). It carries out the reaction N-(9Z-octadecenoyl)-sphing-4-enine-1-phosphate(in) = N-(9Z-octadecenoyl)-sphing-4-enine-1-phosphate(out). In terms of biological role, mediates the intracellular transfer of ceramide-1-phosphate (C1P) between organelle membranes and the cell membrane. Required for normal structure of the Golgi stacks. Can bind phosphoceramides with a variety of aliphatic chains, but has a preference for lipids with saturated C16:0 or monounsaturated C18:1 aliphatic chains, and is inefficient with phosphoceramides containing lignoceryl (C24:0). Plays a role in the regulation of the cellular levels of ceramide-1-phosphate, and thereby contributes to the regulation of phospholipase PLA2G4A activity and the release of arachidonic acid. Has no activity with galactosylceramide, lactosylceramide, sphingomyelin, phosphatidylcholine, phosphatidic acid and ceramide. C1P transfer is stimulated by phosphatidylserine in C1P source vesicles. Regulates autophagy, inflammasome mediated IL1B and IL18 processing, and pyroptosis, but not apoptosis. The chain is Ceramide-1-phosphate transfer protein from Mus musculus (Mouse).